The primary structure comprises 311 residues: Retinol dehydrogenase 8 (311 aa).

NADP(+) is bound at residue 9–18 (LISGCSSGIG). 3 consecutive transmembrane segments (helical) span residues 86 to 106 (VLVNNAGMGLVGPLEGLSLAA), 137 to 157 (IVVISSVMGLQGVIFNDVYAA), and 169 to 189 (LAIQLLQFNIFISLVEPGPVV). Serine 142 contributes to the substrate binding site. Catalysis depends on tyrosine 155, which acts as the Proton acceptor.

It belongs to the short-chain dehydrogenases/reductases (SDR) family. In terms of tissue distribution, detected in photoreceptor outer segments in the retina (at protein level).

It is found in the membrane. The enzyme catalyses all-trans-retinol + NADP(+) = all-trans-retinal + NADPH + H(+). Functionally, retinol dehydrogenase with a clear preference for NADP. Converts all-trans-retinal to all-trans-retinol. May play a role in the regeneration of visual pigment at high light intensity. In Homo sapiens (Human), this protein is Retinol dehydrogenase 8 (RDH8).